A 355-amino-acid polypeptide reads, in one-letter code: Phosphoribosylformylglycinamidine cyclo-ligase (355 aa).

This sequence belongs to the AIR synthase family.

It localises to the cytoplasm. It carries out the reaction 2-formamido-N(1)-(5-O-phospho-beta-D-ribosyl)acetamidine + ATP = 5-amino-1-(5-phospho-beta-D-ribosyl)imidazole + ADP + phosphate + H(+). Its pathway is purine metabolism; IMP biosynthesis via de novo pathway; 5-amino-1-(5-phospho-D-ribosyl)imidazole from N(2)-formyl-N(1)-(5-phospho-D-ribosyl)glycinamide: step 2/2. The sequence is that of Phosphoribosylformylglycinamidine cyclo-ligase from Paraburkholderia phymatum (strain DSM 17167 / CIP 108236 / LMG 21445 / STM815) (Burkholderia phymatum).